A 236-amino-acid polypeptide reads, in one-letter code: Phosphoribosylaminoimidazole-succinocarboxamide synthase (236 aa).

This sequence belongs to the SAICAR synthetase family.

The enzyme catalyses 5-amino-1-(5-phospho-D-ribosyl)imidazole-4-carboxylate + L-aspartate + ATP = (2S)-2-[5-amino-1-(5-phospho-beta-D-ribosyl)imidazole-4-carboxamido]succinate + ADP + phosphate + 2 H(+). It functions in the pathway purine metabolism; IMP biosynthesis via de novo pathway; 5-amino-1-(5-phospho-D-ribosyl)imidazole-4-carboxamide from 5-amino-1-(5-phospho-D-ribosyl)imidazole-4-carboxylate: step 1/2. This chain is Phosphoribosylaminoimidazole-succinocarboxamide synthase, found in Rickettsia bellii (strain OSU 85-389).